Reading from the N-terminus, the 168-residue chain is uncharacterized protein (168 aa).

Helical transmembrane passes span 41-61 (LLPW…LFFI) and 133-153 (KFVI…FFVL).

It localises to the cell membrane. This is an uncharacterized protein from Thermotoga maritima (strain ATCC 43589 / DSM 3109 / JCM 10099 / NBRC 100826 / MSB8).